A 152-amino-acid polypeptide reads, in one-letter code: Arginine repressor (152 aa).

It belongs to the ArgR family.

It localises to the cytoplasm. It functions in the pathway amino-acid biosynthesis; L-arginine biosynthesis [regulation]. Regulates arginine biosynthesis genes. This chain is Arginine repressor, found in Lachnoclostridium phytofermentans (strain ATCC 700394 / DSM 18823 / ISDg) (Clostridium phytofermentans).